Here is a 121-residue protein sequence, read N- to C-terminus: Spermidine export protein MdtJ (121 aa).

A topological domain (cytoplasmic) is located at residue methionine 1. Residues 2–22 (YIYWILLGLAVATEITGTLSM) form a helical membrane-spanning segment. The Periplasmic segment spans residues 23–31 (KWASVSEGN). Residues 32–52 (GGFILMLVMISLSYIFLSFAV) form a helical membrane-spanning segment. The Cytoplasmic portion of the chain corresponds to 53–54 (KK). A helical transmembrane segment spans residues 55 to 75 (IALGVAYALWEGIGILFITLF). The Periplasmic segment spans residues 76–81 (SVLLFD). A helical membrane pass occupies residues 82-102 (ESLSLMKIAGLTTLVAGIVLI). Over 103–121 (KSGTRKARKPELEVNHGAV) the chain is Cytoplasmic.

This sequence belongs to the drug/metabolite transporter (DMT) superfamily. Small multidrug resistance (SMR) (TC 2.A.7.1) family. MdtJ subfamily. As to quaternary structure, forms a complex with MdtI.

The protein localises to the cell inner membrane. Functionally, catalyzes the excretion of spermidine. The polypeptide is Spermidine export protein MdtJ (mdtJ) (Escherichia coli O6:H1 (strain CFT073 / ATCC 700928 / UPEC)).